We begin with the raw amino-acid sequence, 510 residues long: Probable cytosol aminopeptidase (510 aa).

Mn(2+) is bound by residues K272 and D277. K284 is a catalytic residue. Mn(2+) is bound by residues D296, D355, and E357. R359 is a catalytic residue.

The protein belongs to the peptidase M17 family. Requires Mn(2+) as cofactor.

The protein localises to the cytoplasm. The enzyme catalyses Release of an N-terminal amino acid, Xaa-|-Yaa-, in which Xaa is preferably Leu, but may be other amino acids including Pro although not Arg or Lys, and Yaa may be Pro. Amino acid amides and methyl esters are also readily hydrolyzed, but rates on arylamides are exceedingly low.. It catalyses the reaction Release of an N-terminal amino acid, preferentially leucine, but not glutamic or aspartic acids.. Its function is as follows. Presumably involved in the processing and regular turnover of intracellular proteins. Catalyzes the removal of unsubstituted N-terminal amino acids from various peptides. The polypeptide is Probable cytosol aminopeptidase (Synechococcus sp. (strain JA-3-3Ab) (Cyanobacteria bacterium Yellowstone A-Prime)).